Consider the following 394-residue polypeptide: Glycerol-3-phosphate dehydrogenase [NAD(+)] 2 (394 aa).

Residues 41-46, Lys152, and Ala185 contribute to the NAD(+) site; that span reads GSGNWG. Lys152 is a substrate binding site. Lys243 serves as the catalytic Proton acceptor. Residues Arg308 and Gln337 each coordinate NAD(+). A substrate-binding site is contributed by 308 to 309; that stretch reads RN.

This sequence belongs to the NAD-dependent glycerol-3-phosphate dehydrogenase family.

It catalyses the reaction sn-glycerol 3-phosphate + NAD(+) = dihydroxyacetone phosphate + NADH + H(+). This chain is Glycerol-3-phosphate dehydrogenase [NAD(+)] 2 (gpd2), found in Cyberlindnera jadinii (Torula yeast).